The chain runs to 920 residues: Whirlin (920 aa).

The PDZ 1 domain maps to 141–224 (LVSLRRAKAH…LVLSVYSAGR (84 aa)). Residues 241–262 (QGRSTSPPSSLPHGSTLRQHED) form a disordered region. Positions 242–257 (GRSTSPPSSLPHGSTL) are enriched in polar residues. A PDZ 2 domain is found at 278-360 (KVNLVLGDGR…LILTVKDVGR (83 aa)). Disordered stretches follow at residues 502–536 (MKAR…TSTT), 561–603 (CETT…QGHD), 630–730 (FSAP…AMGA), and 752–828 (RALP…PTST). The segment covering 520-536 (SYSDTGSSTGSHGTSTT) has biased composition (low complexity). Residues 561 to 570 (CETTQGSTNA) show a composition bias toward polar residues. 2 stretches are compositionally biased toward pro residues: residues 589 to 598 (IKPPPPPPPL) and 636 to 651 (RSPP…PTPG). Residues 655–674 (ARDSPSSPIYASISHANPSS) show a composition bias toward polar residues. Serine 698 is modified (phosphoserine). Composition is skewed to polar residues over residues 756–775 (QTRT…TLSE) and 785–800 (EAST…NTKN). The span at 802–813 (NGKELPQTERTT) shows a compositional bias: basic and acidic residues. A PDZ 3 domain is found at 829–912 (LIRVRKSAAT…TKERDYIDFL (84 aa)).

Forms homooligomers. Interacts (via C-terminal PDZ domain) with MYO15A; this interaction is necessary for localization of WHRN to stereocilia tips. Interacts (via C-terminal PDZ domain) with MPP1/p55. Interacts with LRRC4C/NGL1. Interacts with MYO7A. Interacts with RPGR. Interacts with EPS8. Interacts with CASK. Interacts with CIB2. Component of USH2 complex, composed of ADGRV1, PDZD7, USH2A and WHRN. Interacts (via PDZ domains) with PDZD7; the interaction is direct. Interacts (via N-terminal PDZ domain) with USH2A (via cytoplasmic region). Interacts with ADGRV1/MASS1 (via cytoplasmic region). As to expression, ubiquitous. Highly expressed in heart, spleen, lung and liver. Highly expressed in brain, in the olfactory bulb, thalamus, layers III-V of the cerebral cortex and the molecular layer of cerebellum. Detected in soma and dendrites of thalamic neurons, and in cerebrum in cell bodies and apical dendrites of pyramidal neurons. Expressed in retina and inner ear.

It is found in the cytoplasm. The protein resides in the cell projection. Its subcellular location is the stereocilium. The protein localises to the growth cone. It localises to the synapse. Involved in hearing and vision as member of the USH2 complex. Necessary for elongation and maintenance of inner and outer hair cell stereocilia in the organ of Corti in the inner ear. Involved in the maintenance of the hair bundle ankle region, which connects stereocilia in cochlear hair cells of the inner ear. In retina photoreceptors, required for the maintenance of periciliary membrane complex that seems to play a role in regulating intracellular protein transport. The polypeptide is Whirlin (Rattus norvegicus (Rat)).